The chain runs to 373 residues: Histidinol-phosphate aminotransferase (373 aa).

Lys-233 carries the post-translational modification N6-(pyridoxal phosphate)lysine.

This sequence belongs to the class-II pyridoxal-phosphate-dependent aminotransferase family. Histidinol-phosphate aminotransferase subfamily. As to quaternary structure, homodimer. Pyridoxal 5'-phosphate is required as a cofactor.

It carries out the reaction L-histidinol phosphate + 2-oxoglutarate = 3-(imidazol-4-yl)-2-oxopropyl phosphate + L-glutamate. The protein operates within amino-acid biosynthesis; L-histidine biosynthesis; L-histidine from 5-phospho-alpha-D-ribose 1-diphosphate: step 7/9. This chain is Histidinol-phosphate aminotransferase, found in Nitratidesulfovibrio vulgaris (strain ATCC 29579 / DSM 644 / CCUG 34227 / NCIMB 8303 / VKM B-1760 / Hildenborough) (Desulfovibrio vulgaris).